The sequence spans 274 residues: Urease accessory protein UreD 2 (274 aa).

This sequence belongs to the UreD family. UreD, UreF and UreG form a complex that acts as a GTP-hydrolysis-dependent molecular chaperone, activating the urease apoprotein by helping to assemble the nickel containing metallocenter of UreC. The UreE protein probably delivers the nickel.

The protein resides in the cytoplasm. In terms of biological role, required for maturation of urease via the functional incorporation of the urease nickel metallocenter. The chain is Urease accessory protein UreD 2 from Brucella anthropi (strain ATCC 49188 / DSM 6882 / CCUG 24695 / JCM 21032 / LMG 3331 / NBRC 15819 / NCTC 12168 / Alc 37) (Ochrobactrum anthropi).